The following is a 306-amino-acid chain: Ribosomal protein L11 methyltransferase (306 aa).

T154, G179, D201, and N242 together coordinate S-adenosyl-L-methionine.

It belongs to the methyltransferase superfamily. PrmA family.

Its subcellular location is the cytoplasm. It carries out the reaction L-lysyl-[protein] + 3 S-adenosyl-L-methionine = N(6),N(6),N(6)-trimethyl-L-lysyl-[protein] + 3 S-adenosyl-L-homocysteine + 3 H(+). Its function is as follows. Methylates ribosomal protein L11. In Xanthomonas campestris pv. campestris (strain 8004), this protein is Ribosomal protein L11 methyltransferase.